A 140-amino-acid polypeptide reads, in one-letter code: Large ribosomal subunit protein uL11 (140 aa).

The protein belongs to the universal ribosomal protein uL11 family. Part of the ribosomal stalk of the 50S ribosomal subunit. Interacts with L10 and the large rRNA to form the base of the stalk. L10 forms an elongated spine to which L12 dimers bind in a sequential fashion forming a multimeric L10(L12)X complex. One or more lysine residues are methylated.

Functionally, forms part of the ribosomal stalk which helps the ribosome interact with GTP-bound translation factors. The protein is Large ribosomal subunit protein uL11 of Nitratidesulfovibrio vulgaris (strain ATCC 29579 / DSM 644 / CCUG 34227 / NCIMB 8303 / VKM B-1760 / Hildenborough) (Desulfovibrio vulgaris).